The sequence spans 422 residues: Validoxylamine A glucosyltransferase (422 aa).

Belongs to the glycosyltransferase 2 family. Requires Mn(2+) as cofactor.

It carries out the reaction validoxylamine A + UDP-alpha-D-glucose = validamycin A + UDP + H(+). Its function is as follows. Involved in the biosynthesis of the antifungal agent validamycin A. Catalyzes the final attachment of glucose from UDP-alpha-D-glucose to validoxylamine A to yield validamycin A. UDP-glucose is the most efficient glycosyl donor, whereas GDP-glucose and ADP-glucose are much less efficient. ValG also utilizes UDP-galactose as substrate to produce the new validamycin analog, 4''-epi-validamycin A. This Streptomyces hygroscopicus subsp. jinggangensis (strain 5008) protein is Validoxylamine A glucosyltransferase.